The following is a 303-amino-acid chain: MNIEVLKNEIYKLKEEKNALIVAHNYQIDEVQEIADFVGDSFYLSKVCAERPEKVIVFCGVHFMAESAKILSPHKKVLLPEIDAGCPLADMVTAEDVENLKKKYPDYSIVCYINSPASVKAKSDVICTSSNAVKIVREFPNDKIIFLPDKNLGSFVKKQVPEKDIILWEGFCITHYKIKKEDVEKAKSLHPNALVLVHPECRPEVVELADFVGSTKQIIDFANTSKEKEFIIGTEMGVLYSLKKLNPDKKFYILHPGMICPNMKKNTLQSVRDALLYERYQIEVEEEIMEGAKKALSKMLEMG.

Residues His-24 and Ser-41 each coordinate iminosuccinate. Cys-86 contributes to the [4Fe-4S] cluster binding site. Iminosuccinate-binding positions include Tyr-112–Asn-114 and Ser-129. Residue Cys-172 participates in [4Fe-4S] cluster binding. Iminosuccinate contacts are provided by residues His-198–Glu-200 and Thr-215. [4Fe-4S] cluster is bound at residue Cys-260.

This sequence belongs to the quinolinate synthase family. Type 2 subfamily. The cofactor is [4Fe-4S] cluster.

The protein resides in the cytoplasm. It catalyses the reaction iminosuccinate + dihydroxyacetone phosphate = quinolinate + phosphate + 2 H2O + H(+). It functions in the pathway cofactor biosynthesis; NAD(+) biosynthesis; quinolinate from iminoaspartate: step 1/1. In terms of biological role, catalyzes the condensation of iminoaspartate with dihydroxyacetone phosphate to form quinolinate. In Caldicellulosiruptor bescii (strain ATCC BAA-1888 / DSM 6725 / KCTC 15123 / Z-1320) (Anaerocellum thermophilum), this protein is Quinolinate synthase.